The primary structure comprises 159 residues: ATP synthase subunit b (159 aa).

The chain crosses the membrane as a helical span at residues 2–22; sequence EFNLVTIGFTIVNFIILMLIL.

The protein belongs to the ATPase B chain family. In terms of assembly, F-type ATPases have 2 components, F(1) - the catalytic core - and F(0) - the membrane proton channel. F(1) has five subunits: alpha(3), beta(3), gamma(1), delta(1), epsilon(1). F(0) has three main subunits: a(1), b(2) and c(10-14). The alpha and beta chains form an alternating ring which encloses part of the gamma chain. F(1) is attached to F(0) by a central stalk formed by the gamma and epsilon chains, while a peripheral stalk is formed by the delta and b chains.

The protein localises to the cell membrane. Its function is as follows. F(1)F(0) ATP synthase produces ATP from ADP in the presence of a proton or sodium gradient. F-type ATPases consist of two structural domains, F(1) containing the extramembraneous catalytic core and F(0) containing the membrane proton channel, linked together by a central stalk and a peripheral stalk. During catalysis, ATP synthesis in the catalytic domain of F(1) is coupled via a rotary mechanism of the central stalk subunits to proton translocation. Functionally, component of the F(0) channel, it forms part of the peripheral stalk, linking F(1) to F(0). In Clostridium acetobutylicum (strain ATCC 824 / DSM 792 / JCM 1419 / IAM 19013 / LMG 5710 / NBRC 13948 / NRRL B-527 / VKM B-1787 / 2291 / W), this protein is ATP synthase subunit b.